The following is a 188-amino-acid chain: Transcription factor FapR (188 aa).

The protein belongs to the FapR family.

Functionally, transcriptional factor involved in regulation of membrane lipid biosynthesis by repressing genes involved in fatty acid and phospholipid metabolism. The chain is Transcription factor FapR from Bacillus velezensis (strain DSM 23117 / BGSC 10A6 / LMG 26770 / FZB42) (Bacillus amyloliquefaciens subsp. plantarum).